A 447-amino-acid chain; its full sequence is Citrate synthase-like protein oryE (447 aa).

Catalysis depends on residues H331 and D387.

The protein belongs to the citrate synthase family.

Its pathway is secondary metabolite biosynthesis. Its function is as follows. Citrate synthase-like protein; part of the gene cluster that mediates the biosynthesis of oryzines, natural products with an unusual maleidride backbone. The two subunits of the fungal fatty acid synthase oryfasA and oryfasB probably form octenoic acid. This fatty acid is most likely activated by the acyl-CoA ligase oryP to give octenyl-CoA before the citrate synthase-like protein oryE catalyzes condensation with oxaloacetate to form tricarboxylic acid. The next steps of the pathways are conjectural, but a favorite possible route has been proposed, beginning with decarboxylation and concomitant dehydration by the decarboxylase oryM, followed by tautomerization, which may lead to the production of a diene intermediate. Reduction of this diene intermediate could give the known metabolite piliformic acid. On the pathway to oryzine B and oryzine A, however, hydroxylation of the diene by the alpha-ketoglutarate-dependent dioxygenase oryG and lactonisation by the lactonohydrolases oryH or oryL could give oryzine B directly. Finally, enoyl reduction by the dehydrogenase oryD would then convert oryzine B into oryzine A. This chain is Citrate synthase-like protein oryE, found in Aspergillus oryzae (strain ATCC 42149 / RIB 40) (Yellow koji mold).